The following is a 519-amino-acid chain: Apolipoprotein N-acyltransferase (519 aa).

Helical transmembrane passes span 6-26 (APLG…IWIF), 47-67 (LTAI…ITGV), 83-103 (IAAF…FVWL), 126-146 (LFIL…SHSI), 174-194 (LLSA…IDFL), and 206-226 (WHYF…GWLL). A CN hydrolase domain is found at 244-482 (IQGNIPNQIK…YEIHAAPIYR (239 aa)). Glutamate 285 acts as the Proton acceptor in catalysis. Residue lysine 343 is part of the active site. The active-site Nucleophile is cysteine 394. A helical transmembrane segment spans residues 496–516 (VVFLLLVVSAIAWLYQIVFPL).

The protein belongs to the CN hydrolase family. Apolipoprotein N-acyltransferase subfamily.

The protein resides in the cell inner membrane. The catalysed reaction is N-terminal S-1,2-diacyl-sn-glyceryl-L-cysteinyl-[lipoprotein] + a glycerophospholipid = N-acyl-S-1,2-diacyl-sn-glyceryl-L-cysteinyl-[lipoprotein] + a 2-acyl-sn-glycero-3-phospholipid + H(+). It participates in protein modification; lipoprotein biosynthesis (N-acyl transfer). Catalyzes the phospholipid dependent N-acylation of the N-terminal cysteine of apolipoprotein, the last step in lipoprotein maturation. This is Apolipoprotein N-acyltransferase from Synechocystis sp. (strain ATCC 27184 / PCC 6803 / Kazusa).